The chain runs to 130 residues: Small ribosomal subunit protein uS11 (130 aa).

It belongs to the universal ribosomal protein uS11 family. As to quaternary structure, part of the 30S ribosomal subunit. Interacts with proteins S7 and S18. Binds to IF-3.

Located on the platform of the 30S subunit, it bridges several disparate RNA helices of the 16S rRNA. Forms part of the Shine-Dalgarno cleft in the 70S ribosome. This Teredinibacter turnerae (strain ATCC 39867 / T7901) protein is Small ribosomal subunit protein uS11.